The following is a 287-amino-acid chain: PsbP domain-containing protein 1, chloroplastic (287 aa).

It belongs to the PsbP family. In terms of assembly, partially associated with photosystem I (PSI) complex, but is not a subunit of the complex. Interacts with PsaA and PsaB, but not with PasF.

The protein localises to the plastid. It is found in the chloroplast thylakoid lumen. Its function is as follows. Photosystem I assembly factor that assists the proper folding and integration of PsaB and PsaA into the thylakoid membrane. The polypeptide is PsbP domain-containing protein 1, chloroplastic (PPD1) (Arabidopsis thaliana (Mouse-ear cress)).